Consider the following 861-residue polypeptide: Probable beta-glucosidase A (861 aa).

Residues 1–19 (MKLGWIEVAALAAASVVSA) form the signal peptide. N62, N212, and N253 each carry an N-linked (GlcNAc...) asparagine glycan. Residue D281 is part of the active site. N316, N323, N355, N443, N524, N543, N565, N669, and N713 each carry an N-linked (GlcNAc...) asparagine glycan. The tract at residues 730-754 (DSKYIPEGATDGSAQPRLPASGGAG) is disordered. An N-linked (GlcNAc...) asparagine glycan is attached at N846.

Belongs to the glycosyl hydrolase 3 family.

It is found in the secreted. It catalyses the reaction Hydrolysis of terminal, non-reducing beta-D-glucosyl residues with release of beta-D-glucose.. The protein operates within glycan metabolism; cellulose degradation. Functionally, beta-glucosidases are one of a number of cellulolytic enzymes involved in the degradation of cellulosic biomass. Catalyzes the last step releasing glucose from the inhibitory cellobiose. This is Probable beta-glucosidase A (bglA) from Aspergillus oryzae (strain ATCC 42149 / RIB 40) (Yellow koji mold).